We begin with the raw amino-acid sequence, 242 residues long: Protein HTATIP2 (242 aa).

Residue Ala-2 is modified to N-acetylalanine. A required for interaction with elongation factor EEF1A1 region spans residues 2 to 25; sequence ADKEALPKLREDFKMQNKSVFILG. Positions 27, 28, 29, 30, 52, 53, 92, 93, 143, 147, 170, and 178 each coordinate NADPH. Catalysis depends on Tyr-143, which acts as the Proton acceptor. Residue Lys-147 is part of the active site.

Monomer. Forms homodimers during oxidative stress. Interacts (via N-terminus) with elongation factor EEF1A1 (via middle-region); the interaction is direct and competes with EEF1A1 binding to guanyl-nucleotide exchange factor EEF1B2, thereby inhibiting GDP for GTP exchange and reactivation of EEF1A1. Interacts with nuclear transport receptors XPO4, IPO5/RANBP5, IPO7, IPO9 and KPNB1 as well as GCN1L1/GCN1 and LRPPRC probably through their HEAT repeats. Binds NCOA5/CIA.

The protein resides in the cytoplasm. Functionally, represses translation by preventing reactivation of elongation factor eEF1A. May also inhibit nuclear import by competing with nuclear import substrates for binding to a subset of nuclear transport receptors. Has additionally been proposed to act as a redox sensor involved in cellular oxidative stress surveillance. This chain is Protein HTATIP2, found in Mus musculus (Mouse).